Here is a 1112-residue protein sequence, read N- to C-terminus: Glutamate receptor-interacting protein 1 (1112 aa).

Serine 43 bears the Phosphoserine mark. PDZ domains lie at 53–136, 150–238, 252–336, 471–560, 572–657, and 672–754; these read VVEL…EYEL, TVEV…EYDV, LVEV…LPHH, EVVL…EFDV, HVKL…RKDE, and TVEL…KKQT. Disordered stretches follow at residues 752–796, 841–886, and 922–963; these read KQTD…VYPS, KRAS…AEQE, and NHEA…DVGR. The segment covering 869–880 has biased composition (low complexity); that stretch reads STASGFAGASDS. A compositionally biased stretch (polar residues) spans 928 to 958; the sequence is ARSQLGRQASFQERSNSRPHYSQTTRSNTLP. The region spanning 988-1070 is the PDZ 7 domain; it reads KVTLYKDSGM…KLDLVISRNP (83 aa). Positions 1077–1112 are disordered; it reads IEQPALPSDWSEQNSAFFQQPSHGGNLETREPTNTL. The span at 1086 to 1099 shows a compositional bias: polar residues; it reads WSEQNSAFFQQPSH.

As to quaternary structure, interacts with EFNB1, EPHA7, EPHB2, EFNB3, KIF5A, KIF5C, KIF5B and the C-terminal tail of PRLHR. Forms a ternary complex with GRIA2 and CSPG4. Can form homomultimers or heteromultimers with GRIP2. Interacts with GRIA2, GRIA3, GRIPAP1/GRASP1, PPFIA1, PPFIA4, FRAS1, PLCD4, PTPRF and liprins-alpha. Interacts with ATAD1 in an ATP-dependent manner. ATAD1-catalyzed ATP hydrolysis disrupts binding to ATAD1 and to GRIA2 and leads to AMPAR complex disassembly. Interacts with SLC30A9. Interacts with BUD23. Forms a complex with NSG1, GRIA2 and STX12; controls the intracellular fate of AMPAR and the endosomal sorting of the GRIA2 subunit toward recycling and membrane targeting. Interacts with NSG1. As to expression, expressed in brain, testis and retina. In brain highly expressed in the olfactory bulb, cortex and hippocampus and lower level in thalamus, cerebellum and spinal cord. In brain it is found in the perikaryon, dendrites, dendritic shafts, dendritic spines and, excitatory and inhibitory synapses of neurons. In retina, it is most abundant in the plexiform layers than in perikarya.

Its subcellular location is the cytoplasmic vesicle. The protein localises to the perikaryon. It is found in the cell projection. It localises to the dendrite. The protein resides in the cytoplasm. Its subcellular location is the endomembrane system. The protein localises to the postsynaptic cell membrane. It is found in the postsynaptic density. It localises to the endoplasmic reticulum membrane. May play a role as a localized scaffold for the assembly of a multiprotein signaling complex and as mediator of the trafficking of its binding partners at specific subcellular location in neurons. Through complex formation with NSG1, GRIA2 and STX12 controls the intracellular fate of AMPAR and the endosomal sorting of the GRIA2 subunit toward recycling and membrane targeting. The polypeptide is Glutamate receptor-interacting protein 1 (Grip1) (Rattus norvegicus (Rat)).